We begin with the raw amino-acid sequence, 225 residues long: C-reactive protein (225 aa).

The N-terminal stretch at 1-19 is a signal peptide; that stretch reads MEKLLWCLLIMISFSRTFG. The region spanning 24 to 225 is the Pentraxin (PTX) domain; the sequence is FKKAFVFPKE…DVFIKPQLWS (202 aa). A disulfide bridge links C55 with C116. 5 residues coordinate Ca(2+): N80, E157, Q158, D159, and Q169.

Belongs to the pentraxin family. As to quaternary structure, homopentamer. Pentraxin (or pentaxin) have a discoid arrangement of 5 non-covalently bound subunits. Interacts with FCN1; may regulate monocyte activation by FCN1. It depends on Ca(2+) as a cofactor. As to expression, found in plasma.

The protein localises to the secreted. Displays several functions associated with host defense: it promotes agglutination, bacterial capsular swelling, phagocytosis and complement fixation through its calcium-dependent binding to phosphorylcholine. Can interact with DNA and histones and may scavenge nuclear material released from damaged circulating cells. This is C-reactive protein (Crp) from Mus musculus (Mouse).